The chain runs to 437 residues: GTPase Obg (437 aa).

Residues 2 to 160 (SMFLDTAKIS…RQLELELKIL (159 aa)) enclose the Obg domain. Residues 161-338 (ADVGLVGFPS…LLEATAELLA (178 aa)) enclose the OBG-type G domain. Residues 167–174 (GFPSVGKS), 192–196 (FTTIV), 214–217 (DLPG), 284–287 (NKMD), and 319–321 (SSL) each bind GTP. Mg(2+) contacts are provided by Ser-174 and Thr-194. In terms of domain architecture, OCT spans 359–437 (GFAEAEKEFE…IGKFEFEFVD (79 aa)).

The protein belongs to the TRAFAC class OBG-HflX-like GTPase superfamily. OBG GTPase family. As to quaternary structure, monomer. The cofactor is Mg(2+).

It is found in the cytoplasm. Its function is as follows. An essential GTPase which binds GTP, GDP and possibly (p)ppGpp with moderate affinity, with high nucleotide exchange rates and a fairly low GTP hydrolysis rate. Plays a role in control of the cell cycle, stress response, ribosome biogenesis and in those bacteria that undergo differentiation, in morphogenesis control. The sequence is that of GTPase Obg from Streptococcus pyogenes serotype M28 (strain MGAS6180).